Reading from the N-terminus, the 397-residue chain is Arginine biosynthesis bifunctional protein ArgJ (397 aa).

The substrate site is built by Thr-147, Lys-173, Thr-184, Glu-270, Asn-392, and Thr-397. Thr-184 acts as the Nucleophile in catalysis.

This sequence belongs to the ArgJ family. As to quaternary structure, heterotetramer of two alpha and two beta chains.

The protein resides in the cytoplasm. The catalysed reaction is N(2)-acetyl-L-ornithine + L-glutamate = N-acetyl-L-glutamate + L-ornithine. It catalyses the reaction L-glutamate + acetyl-CoA = N-acetyl-L-glutamate + CoA + H(+). The protein operates within amino-acid biosynthesis; L-arginine biosynthesis; L-ornithine and N-acetyl-L-glutamate from L-glutamate and N(2)-acetyl-L-ornithine (cyclic): step 1/1. It functions in the pathway amino-acid biosynthesis; L-arginine biosynthesis; N(2)-acetyl-L-ornithine from L-glutamate: step 1/4. In terms of biological role, catalyzes two activities which are involved in the cyclic version of arginine biosynthesis: the synthesis of N-acetylglutamate from glutamate and acetyl-CoA as the acetyl donor, and of ornithine by transacetylation between N(2)-acetylornithine and glutamate. This chain is Arginine biosynthesis bifunctional protein ArgJ, found in Streptococcus thermophilus (strain ATCC BAA-250 / LMG 18311).